Here is a 339-residue protein sequence, read N- to C-terminus: tRNA N6-adenosine threonylcarbamoyltransferase (339 aa).

Fe cation is bound by residues H111 and H115. Substrate contacts are provided by residues 139 to 143, D172, G185, D189, and N280; that span reads LVSGG. Fe cation is bound at residue D308.

This sequence belongs to the KAE1 / TsaD family. Requires Fe(2+) as cofactor.

Its subcellular location is the cytoplasm. It carries out the reaction L-threonylcarbamoyladenylate + adenosine(37) in tRNA = N(6)-L-threonylcarbamoyladenosine(37) in tRNA + AMP + H(+). Required for the formation of a threonylcarbamoyl group on adenosine at position 37 (t(6)A37) in tRNAs that read codons beginning with adenine. Is involved in the transfer of the threonylcarbamoyl moiety of threonylcarbamoyl-AMP (TC-AMP) to the N6 group of A37, together with TsaE and TsaB. TsaD likely plays a direct catalytic role in this reaction. This chain is tRNA N6-adenosine threonylcarbamoyltransferase, found in Bacteroides thetaiotaomicron (strain ATCC 29148 / DSM 2079 / JCM 5827 / CCUG 10774 / NCTC 10582 / VPI-5482 / E50).